We begin with the raw amino-acid sequence, 270 residues long: A-type potassium channel modulatory protein KCNIP2 (270 aa).

The span at 1 to 17 (MRGQGRKESLSDSRDLD) shows a compositional bias: basic and acidic residues. The segment at 1 to 33 (MRGQGRKESLSDSRDLDGSYDQLTGHPPGPTKK) is disordered. Serine 9 is modified (phosphoserine). S-palmitoyl cysteine attachment occurs at residues cysteine 45 and cysteine 46. The EF-hand 1; degenerate domain occupies 81-137 (FELSTVCHRPEGLEQLQEQTKFTRKELQVLYRGFKNECPSGIVNEENFKQIYSQFFP). 3 consecutive EF-hand domains span residues 140-175 (DSSTYATFLFNAFDTNHDGSVSFEDFVAGLSVILRG), 176-211 (TIDDRLNWAFNLYDLNKDGCITKEEMLDIMKSIYDM), and 224-259 (APREHVESFFQKMDRNKDGVVTIEEFIESCQKDENI). Positions 153, 155, 157, 159, 164, 189, 191, 193, 195, 200, 237, 239, 241, and 248 each coordinate Ca(2+). The segment at 257–270 (ENIMRSMQLFDNVI) is interaction with KCND2.

This sequence belongs to the recoverin family. As to quaternary structure, component of heteromultimeric potassium channels. Identified in potassium channel complexes containing KCND1, KCND2, KCND3, KCNIP1, KCNIP2, KCNIP3, KCNIP4, DPP6 and DPP10. The KCND2-KCNIP2 channel complex contains four KCND2 and four KCNIP2 subunits. Interacts with KCND2. Probably part of a complex consisting of KCNIP1, KCNIP2 isoform 3 and KCND2. At least isoform 2 and isoform 3 can self-associate to form homodimers and homotetramers. Isoform 3 interacts with KCNIP1 in a calcium-dependent manner. Interacts with KCND3; each KCNIP2 monomer interacts with two adjacent KCND3 subunits, through both the N-terminal inactivation ball of a KCND3 subunit and a C-terminal helix from the adjacent KCND3 subunit, clamping them together; this interaction modulates the channel gating kinetics. Post-translationally, palmitoylated. Palmitoylation enhances association with the plasma membrane. As to expression, expressed in heart ventricle with isoform 1 as most prominent form.

It localises to the cell membrane. In terms of biological role, regulatory subunit of Kv4/D (Shal)-type voltage-gated rapidly inactivating A-type potassium channels. Modulates channel density, inactivation kinetics and rate of recovery from inactivation in a calcium-dependent and isoform-specific manner. Involved in KCND2 and KCND3 trafficking to the cell surface. May be required for the expression of I(To) currents in the heart. This chain is A-type potassium channel modulatory protein KCNIP2, found in Mustela putorius furo (European domestic ferret).